A 681-amino-acid chain; its full sequence is Mitosis inhibitor nif1 (681 aa).

The tract at residues 22-43 is disordered; it reads LNKKDGNDDDKAEHSKRSGYHG. Over residues 23–37 the composition is skewed to basic and acidic residues; sequence NKKDGNDDDKAEHSK. A Phosphoserine modification is found at Ser70. Disordered regions lie at residues 80 to 104 and 182 to 324; these read TTSGSSSDLLNIESPASPAEASSPF and YYHE…SSRQ. Over residues 92–103 the composition is skewed to low complexity; that stretch reads ESPASPAEASSP. Polar residues predominate over residues 191–203; it reads TASNTSPTPNSIK. At Ser196 the chain carries Phosphoserine. Residues 238-278 show a composition bias toward low complexity; the sequence is SSGDSTPLSGSSSSKGMLMSMSTSENHSLSSNPELSNSNLL. Positions 296 to 306 are enriched in basic and acidic residues; the sequence is SSKEPDKEHST. 2 Sel1-like repeats span residues 547–582 and 583–618; these read ALILYELGVCFMHGWGITRDRYLALHLIKLSGAWGD and ADAQFEAGLQMSLGAVSDKDSHMAAYYYRLAGFQGI.

The protein localises to the cytoplasm. In terms of biological role, functions as a negative regulator of mitosis. It interacts with the C-terminal of nim1, thereby inhibiting its kinase activity which phosphorylates wee1. This is Mitosis inhibitor nif1 (nif1) from Schizosaccharomyces pombe (strain 972 / ATCC 24843) (Fission yeast).